Reading from the N-terminus, the 451-residue chain is Homeobox protein meis3-B (451 aa).

The interval 33–64 (HHSLSQSTPYGSTGAAHRVPMPPGMGSNDGLK) is disordered. The span at 34-43 (HSLSQSTPYG) shows a compositional bias: polar residues. One can recognise an MEIS N-terminal domain in the interval 102–185 (GGDVCSSDSF…PIDLVIDDRD (84 aa)). The disordered stretch occupies residues 206-272 (NNTWIRDHDE…RDKKRNKKRG (67 aa)). Over residues 218–230 (STHSGTPGPSSGG) the composition is skewed to low complexity. The segment covering 231-242 (LASQSGDNSSEQ) has biased composition (polar residues). Residues 267-329 (RNKKRGIFPK…NARRRIVQPM (63 aa)) constitute a DNA-binding region (homeobox).

It belongs to the TALE/MEIS homeobox family.

Its subcellular location is the nucleus. In terms of biological role, a caudalizing protein which is required to pattern the anterior/posterior (A/P) axis during central nervous system (CNS) formation. Inhibits anterior neural expression and acts as a transcriptional activator to induce posterior neural gene expression. Maintains a proper A/P balance required for hindbrain formation by activating the FGF/MAPK pathway, which modulates the planar cell polarity (PCP) pathway. Interacts with retinoid signaling during hindbrain patterning. The protein is Homeobox protein meis3-B (meis3-b) of Xenopus laevis (African clawed frog).